Reading from the N-terminus, the 169-residue chain is Unfolded protein response-inducible protein 1 (169 aa).

Involved in the unfolded protein response (UPR), a transcriptional response which up-regulates genes that enable cells to cope with misfolded, endoplasmic reticulum-retained proteins. UPR is part of the endoplasmic reticulum quality control (ERQC) which prevents the exit of misfolded secretory and membrane proteins from the endoplasmic reticulum. This chain is Unfolded protein response-inducible protein 1 (ULI1), found in Saccharomyces cerevisiae (strain ATCC 204508 / S288c) (Baker's yeast).